A 415-amino-acid polypeptide reads, in one-letter code: tRNA(Met) cytidine acetate ligase (415 aa).

ATP contacts are provided by residues 7–20 (VVEYNPFHNGHRYH), G101, N162, and 187–188 (RI).

Belongs to the TmcAL family.

The protein localises to the cytoplasm. It catalyses the reaction cytidine(34) in elongator tRNA(Met) + acetate + ATP = N(4)-acetylcytidine(34) in elongator tRNA(Met) + AMP + diphosphate. Catalyzes the formation of N(4)-acetylcytidine (ac(4)C) at the wobble position of elongator tRNA(Met), using acetate and ATP as substrates. First activates an acetate ion to form acetyladenylate (Ac-AMP) and then transfers the acetyl group to tRNA to form ac(4)C34. In Bacillus velezensis (strain DSM 23117 / BGSC 10A6 / LMG 26770 / FZB42) (Bacillus amyloliquefaciens subsp. plantarum), this protein is tRNA(Met) cytidine acetate ligase.